A 61-amino-acid chain; its full sequence is MASATIKVTQTRSTIGILEKHKATMRGLGLRRIGHTVELEDTPAVRGMVNKVNYLVRVEGE.

The protein belongs to the universal ribosomal protein uL30 family. In terms of assembly, part of the 50S ribosomal subunit.

This is Large ribosomal subunit protein uL30 from Chromohalobacter salexigens (strain ATCC BAA-138 / DSM 3043 / CIP 106854 / NCIMB 13768 / 1H11).